The following is a 223-amino-acid chain: Flagellar L-ring protein (223 aa).

A signal peptide spans 1-18 (MKKSLMALIVVGSFLLSA). A lipid anchor (N-palmitoyl cysteine) is attached at cysteine 19. The S-diacylglycerol cysteine moiety is linked to residue cysteine 19.

Belongs to the FlgH family. As to quaternary structure, the basal body constitutes a major portion of the flagellar organelle and consists of four rings (L,P,S, and M) mounted on a central rod.

The protein localises to the cell outer membrane. Its subcellular location is the bacterial flagellum basal body. Its function is as follows. Assembles around the rod to form the L-ring and probably protects the motor/basal body from shearing forces during rotation. The sequence is that of Flagellar L-ring protein from Herminiimonas arsenicoxydans.